Consider the following 110-residue polypeptide: Thiosulfate sulfurtransferase GlpE (110 aa).

The 89-residue stretch at 17 to 105 (HQGKAVLVDI…WHRHFPAEVE (89 aa)) folds into the Rhodanese domain. The active-site Cysteine persulfide intermediate is Cys-65.

The protein belongs to the GlpE family.

The protein localises to the cytoplasm. It carries out the reaction thiosulfate + hydrogen cyanide = thiocyanate + sulfite + 2 H(+). The catalysed reaction is thiosulfate + [thioredoxin]-dithiol = [thioredoxin]-disulfide + hydrogen sulfide + sulfite + 2 H(+). Its function is as follows. Transferase that catalyzes the transfer of sulfur from thiosulfate to thiophilic acceptors such as cyanide or dithiols. May function in a CysM-independent thiosulfate assimilation pathway by catalyzing the conversion of thiosulfate to sulfite, which can then be used for L-cysteine biosynthesis. The sequence is that of Thiosulfate sulfurtransferase GlpE from Enterobacter sp. (strain 638).